The following is a 38-amino-acid chain: Defensin-1 (38 aa).

3 disulfide bridges follow: C4–C25, C11–C33, and C15–C35.

The protein resides in the secreted. Has antibacterial activity against the Gram-positive bacteria L.lactis and S.aureus, and against the Gram-negative bacteria E.coli D32 and V.parahemolyticus. The polypeptide is Defensin-1 (Crassostrea virginica (Eastern oyster)).